The following is a 924-amino-acid chain: 104 kDa microneme/rhoptry antigen (924 aa).

The signal sequence occupies residues 1 to 19 (MKFLILLFNILCLFPVLAA). The interval 490 to 907 (SKKKLAPITE…KKPKKPDSAY (418 aa)) is disordered. Composition is skewed to basic and acidic residues over residues 522-532 (PGDKEGSEGHK) and 573-588 (GPKD…EPRK). The span at 592-617 (PRTASPTRRPSPKLPQLSKLPKSTSP) shows a compositional bias: low complexity. Basic and acidic residues predominate over residues 653–673 (SFKEKFYDDYSKAASRSKETK). A compositionally biased stretch (low complexity) spans 724–736 (SPSTSPSEFFTPP). Basic and acidic residues-rich tracts occupy residues 737-747 (ESKRTRFHETP), 770-783 (KSPD…RSPS), and 816-825 (DPGRMAKDAS). Residues 857–867 (DDEGTEADDEE) are compositionally biased toward acidic residues. Over residues 868–878 (THPPEERQKTE) the composition is skewed to basic and acidic residues. The segment covering 879 to 901 (VRRRRPPKKPSKSPRPSKPKKPK) has biased composition (basic residues). Aspartate 904 carries GPI-anchor amidated aspartate lipidation. A propeptide spans 905-924 (SAYIPSILAILVVSLIVGIL) (removed in mature form).

It localises to the cell membrane. The chain is 104 kDa microneme/rhoptry antigen from Theileria parva (East coast fever infection agent).